The chain runs to 67 residues: Protein AaeX (67 aa).

The next 2 helical transmembrane spans lie at 9-29 (IFGL…ALFF) and 47-67 (PALF…CLFV).

The protein belongs to the AaeX family.

It is found in the cell membrane. In Serratia marcescens, this protein is Protein AaeX.